Reading from the N-terminus, the 226-residue chain is Ribose-5-phosphate isomerase A (226 aa).

Residues 26 to 29 (TGST), 82 to 85 (DGAD), and 95 to 98 (KGGG) contribute to the substrate site. E104 (proton acceptor) is an active-site residue. Residue K122 participates in substrate binding.

This sequence belongs to the ribose 5-phosphate isomerase family. Homodimer.

The catalysed reaction is aldehydo-D-ribose 5-phosphate = D-ribulose 5-phosphate. The protein operates within carbohydrate degradation; pentose phosphate pathway; D-ribose 5-phosphate from D-ribulose 5-phosphate (non-oxidative stage): step 1/1. Functionally, catalyzes the reversible conversion of ribose-5-phosphate to ribulose 5-phosphate. This is Ribose-5-phosphate isomerase A from Streptococcus thermophilus (strain ATCC BAA-250 / LMG 18311).